Consider the following 4083-residue polypeptide: Dynein heavy chain, cytoplasmic (4083 aa).

The stem stretch occupies residues 1 to 1745; sequence MTDDQVAQAL…TIEQSCVSFC (1745 aa). 3 coiled-coil regions span residues 127-166, 381-402, and 801-821; these read DAVVSTNSNLEAKQESINSARRKIKDLSLSLQSLQQFIEV, INQWEALLKEFTSLIRELMRKR, and KLDLQNLEVLINKIQLLVDQA. AAA regions lie at residues 1746 to 1967, 2026 to 2265, 2373 to 2622, and 2716 to 2980; these read YGFE…VLRN, SYLA…YKAD, SLES…WVRG, and TFAE…GNSQ. ATP contacts are provided by residues 1784 to 1791, 2064 to 2071, 2412 to 2419, and 2754 to 2761; these read GPAGTGKT, GDAGTGKT, GPPGSGKT, and GPNYSGKT. A stalk region spans residues 2987–3294; it reads LTSLRRFQSL…RSIKLMESLT (308 aa). Coiled-coil stretches lie at residues 3015-3085, 3223-3302, and 3527-3607; these read LEKL…NERR, LKEE…RWIK, and LEKE…VEDL. AAA stretches follow at residues 3364–3592 and 3748–3952; these read MVNP…EIAK and LKSL…FLDH.

Belongs to the dynein heavy chain family. As to quaternary structure, consists of at least two heavy chains and a number of intermediate and light chains.

It localises to the cytoplasm. It is found in the cytoskeleton. Cytoplasmic dynein acts as a motor for the intracellular retrograde motility of vesicles and organelles along microtubules. Dynein has ATPase activity; the force-producing power stroke is thought to occur on release of ADP. Required to maintain uniform nuclear distribution in hyphae. May play an important role in the proper orientation of the mitotic spindle into the budding daughter cell yeast. Probably required for normal progression of the cell cycle. This is Dynein heavy chain, cytoplasmic (DYN1) from Eremothecium gossypii (strain ATCC 10895 / CBS 109.51 / FGSC 9923 / NRRL Y-1056) (Yeast).